A 67-amino-acid polypeptide reads, in one-letter code: Guanine nucleotide-binding protein G(I)/G(S)/G(O) subunit gamma-13 (67 aa).

Cysteine methyl ester is present on Cys-64. Cys-64 is lipidated: S-farnesyl cysteine. A propeptide spans 65–67 (TIL) (removed in mature form).

The protein belongs to the G protein gamma family. As to quaternary structure, g proteins are composed of 3 units, alpha, beta and gamma.

The protein resides in the cell membrane. Functionally, guanine nucleotide-binding proteins (G proteins) are involved as a modulator or transducer in various transmembrane signaling systems. The beta and gamma chains are required for the GTPase activity, for replacement of GDP by GTP, and for G protein-effector interaction. The chain is Guanine nucleotide-binding protein G(I)/G(S)/G(O) subunit gamma-13 (Gng13) from Mus musculus (Mouse).